The sequence spans 116 residues: Large ribosomal subunit protein bL20 (116 aa).

The protein belongs to the bacterial ribosomal protein bL20 family.

Functionally, binds directly to 23S ribosomal RNA and is necessary for the in vitro assembly process of the 50S ribosomal subunit. It is not involved in the protein synthesizing functions of that subunit. This Fusobacterium nucleatum subsp. nucleatum (strain ATCC 25586 / DSM 15643 / BCRC 10681 / CIP 101130 / JCM 8532 / KCTC 2640 / LMG 13131 / VPI 4355) protein is Large ribosomal subunit protein bL20.